Consider the following 842-residue polypeptide: Taste receptor type 1 member 1 (842 aa).

The signal sequence occupies residues 1–19 (MLFWAAHLLLSLQLAVAYC). Residues 20–568 (WAFSCQRTES…EFLGWHEPIS (549 aa)) are Extracellular-facing. N-linked (GlcNAc...) asparagine glycosylation is found at Asn88, Asn89, Asn96, Asn136, Asn292, Asn480, and Asn530. A helical membrane pass occupies residues 569-589 (LVLLAANTLLLLLLIGTAGLF). Over 590-604 (AWRLHTPVVRSAGGR) the chain is Cytoplasmic. Residues 605–625 (LCFLMLGSLVAGSCSLYSFFG) form a helical membrane-spanning segment. Over 626-640 (KPTVPACLLRQPLFS) the chain is Extracellular. A helical transmembrane segment spans residues 641–661 (LGFAIFLSCLTIRSFQLVIIF). Topologically, residues 662-681 (KFSTKVPTFYHTWAQNHGAG) are cytoplasmic. Residues 682–702 (IFVIVSSTVHLFLCLTWLAMW) form a helical membrane-spanning segment. Topologically, residues 703-725 (TPRPTREYQRFPHLVILECTEVN) are extracellular. Residues 726–746 (SVGFLVAFAHNILLSISTFVC) form a helical membrane-spanning segment. Residues 747 to 762 (SYLGKELPENYNEAKC) lie on the Cytoplasmic side of the membrane. A helical membrane pass occupies residues 763–783 (VTFSLLLHFVSWIAFFTMSSI). At 784–789 (YQGSYL) the chain is on the extracellular side. A helical transmembrane segment spans residues 790 to 810 (PAVNVLAGLATLSGGFSGYFL). The Cytoplasmic portion of the chain corresponds to 811–842 (PKCYVILCRPELNNTEHFQASIQDYTRRCGTT).

Belongs to the G-protein coupled receptor 3 family. TAS1R subfamily. As to quaternary structure, forms heterodimers with TAS1R3. As to expression, expressed strongly only in fungiform papillae.

It is found in the cell membrane. Functionally, putative taste receptor. TAS1R1/TAS1R3 responds to the umami taste stimulus (the taste of monosodium glutamate) and also to most of the 20 standard L-amino acids, but not to their D-enantiomers or other compounds. Sequence differences within and between species can significantly influence the selectivity and specificity of taste responses. The protein is Taste receptor type 1 member 1 (Tas1r1) of Mus musculus (Mouse).